The primary structure comprises 343 residues: Selenide, water dikinase (343 aa).

Residue selenocysteine 16 is part of the active site. A non-standard amino acid (selenocysteine) is located at residue selenocysteine 16. ATP is bound by residues lysine 19 and 46–48 (GAE). Aspartate 49 provides a ligand contact to Mg(2+). Residues aspartate 66, aspartate 89, and 137–139 (GHT) each bind ATP. Mg(2+) is bound at residue aspartate 89. Residue aspartate 225 coordinates Mg(2+).

The protein belongs to the selenophosphate synthase 1 family. Class I subfamily. In terms of assembly, homodimer. Mg(2+) serves as cofactor.

It carries out the reaction hydrogenselenide + ATP + H2O = selenophosphate + AMP + phosphate + 2 H(+). Functionally, synthesizes selenophosphate from selenide and ATP. The protein is Selenide, water dikinase of Geobacter sp. (strain M21).